Reading from the N-terminus, the 88-residue chain is Alpha-latrotoxin-associated low molecular weight protein-2 (88 aa).

Residues 1–19 form the signal peptide; that stretch reads MLKLICIAFLVTVLTLVAG. Residue Gln20 is modified to Pyrrolidone carboxylic acid. Intrachain disulfides connect Cys30-Cys66, Cys46-Cys62, and Cys49-Cys75.

The protein belongs to the arthropod CHH/MIH/GIH/VIH hormone family. In terms of processing, the N-terminus is blocked. In terms of tissue distribution, expressed by the venom gland.

It is found in the secreted. May increase the toxicity of alpha-latrotoxin and/or other venom components. Is non-toxic to mice and to the cockroach Periplaneta americana. This is Alpha-latrotoxin-associated low molecular weight protein-2 from Latrodectus tredecimguttatus (Mediterranean black widow spider).